The chain runs to 160 residues: General odorant-binding protein 2 (160 aa).

The N-terminal stretch at 1–20 (MFSFLILVFVASVADSVIGT) is a signal peptide. 3 cysteine pairs are disulfide-bonded: Cys-38–Cys-73, Cys-69–Cys-127, and Cys-116–Cys-136.

This sequence belongs to the PBP/GOBP family. As to quaternary structure, homodimer. In terms of tissue distribution, detected in antenna (at protein level). Expressed at high levels in antenna.

Its function is as follows. Present in the aqueous fluid surrounding olfactory sensory dendrites and are thought to aid in the capture and transport of hydrophobic odorants into and through this fluid. This is General odorant-binding protein 2 from Bombyx mori (Silk moth).